Reading from the N-terminus, the 327-residue chain is MPPSLTREEVVPSRKRIKLPPWLEVAKPRLIPLLLATTLGGMALTEGWPLSSPRLVCTLGGGALAAAAAGVLNCLWEQELDGRMLRTSGRALPSGRLSPSAAFVGAVSCTLAAAALLVSGVNCLAAGLSLLGLCSYVLLYTALLKPRTTQNIVVGGVAGAIPPLVGAAAATGHIGLGGWWLFALVMVWTPAHFWALALLLHDDYRAVGIPMLPVVKGPLVTTRAIRRYGWATILLSFLGIWALPEGGALYGLLILPFNGRLLQMVERLAAEPNNRDRAKGLFRWSILYLFGVCLLLVMSRMSGAAQFDLQVRAVVDILSGGFLTVAS.

A run of 7 helical transmembrane segments spans residues L55 to L75, A101 to V121, L124 to L144, I152 to G172, W180 to L200, F237 to F257, and A278 to M298.

This sequence belongs to the UbiA prenyltransferase family. Protoheme IX farnesyltransferase subfamily.

The protein resides in the cell inner membrane. The catalysed reaction is heme b + (2E,6E)-farnesyl diphosphate + H2O = Fe(II)-heme o + diphosphate. The protein operates within porphyrin-containing compound metabolism; heme O biosynthesis; heme O from protoheme: step 1/1. Functionally, converts heme B (protoheme IX) to heme O by substitution of the vinyl group on carbon 2 of heme B porphyrin ring with a hydroxyethyl farnesyl side group. This Synechococcus sp. (strain CC9311) protein is Protoheme IX farnesyltransferase.